A 172-amino-acid chain; its full sequence is Adenine phosphoribosyltransferase (172 aa).

It belongs to the purine/pyrimidine phosphoribosyltransferase family. Homodimer.

Its subcellular location is the cytoplasm. It catalyses the reaction AMP + diphosphate = 5-phospho-alpha-D-ribose 1-diphosphate + adenine. The protein operates within purine metabolism; AMP biosynthesis via salvage pathway; AMP from adenine: step 1/1. Its function is as follows. Catalyzes a salvage reaction resulting in the formation of AMP, that is energically less costly than de novo synthesis. This is Adenine phosphoribosyltransferase from Exiguobacterium sp. (strain ATCC BAA-1283 / AT1b).